The sequence spans 394 residues: UPF0284 protein SYNW1869 (394 aa).

It belongs to the UPF0284 family.

This Parasynechococcus marenigrum (strain WH8102) protein is UPF0284 protein SYNW1869.